The primary structure comprises 277 residues: Myelin proteolipid protein (277 aa).

At glycine 2–arginine 9 the chain is on the cytoplasmic side. S-palmitoyl cysteine attachment occurs at residues cysteine 6, cysteine 7, and cysteine 10. The helical transmembrane segment at cysteine 10–glycine 36 threads the bilayer. Over histidine 37 to asparagine 63 the chain is Extracellular. The chain crosses the membrane as a helical span at residues valine 64 to alanine 88. Topologically, residues glutamate 89–lysine 151 are cytoplasmic. A lipid anchor (S-palmitoyl cysteine) is attached at cysteine 109. Serine 114 is modified (phosphoserine). 2 positions are modified to phosphothreonine: threonine 116 and threonine 118. 2 S-palmitoyl cysteine lipidation sites follow: cysteine 139 and cysteine 141. The chain crosses the membrane as a helical span at residues phenylalanine 152–tyrosine 177. Residues phenylalanine 178–phenylalanine 233 are Extracellular-facing. 2 cysteine pairs are disulfide-bonded: cysteine 184–cysteine 228 and cysteine 201–cysteine 220. A lipid anchor (O-palmitoyl serine) is attached at serine 199. The chain crosses the membrane as a helical span at residues glutamine 234–alanine 260. At alanine 261–phenylalanine 277 the chain is on the cytoplasmic side.

This sequence belongs to the myelin proteolipid protein family. In terms of assembly, interacts with MAL.

The protein resides in the cell membrane. The protein localises to the myelin membrane. Its function is as follows. This is the major myelin protein from the central nervous system. It plays an important role in the formation or maintenance of the multilamellar structure of myelin. This is Myelin proteolipid protein (Plp1) from Mus musculus (Mouse).